We begin with the raw amino-acid sequence, 71 residues long: Heat-stable enterotoxin II (71 aa).

The signal sequence occupies residues 1 to 23; that stretch reads MKKNIAFLLASMFVFSIATNAYA. 2 disulfides stabilise this stretch: cysteine 33/cysteine 71 and cysteine 44/cysteine 59.

It is found in the secreted. Functionally, toxin which activates the particulate form of guanylate cyclase and increases cyclic GMP levels within the host intestinal epithelial cells. The chain is Heat-stable enterotoxin II (stiI) from Escherichia coli.